The following is a 314-amino-acid chain: DNA oxidative demethylase ALKBH2 (314 aa).

Residues methionine 1–asparagine 28 are compositionally biased toward polar residues. A disordered region spans residues methionine 1–arginine 75. The span at asparagine 57–arginine 75 shows a compositional bias: basic and acidic residues. Substrate contacts are provided by residues tryptophan 132 and alanine 160–tyrosine 163. Residues arginine 194–leucine 314 form the Fe2OG dioxygenase domain. Residue asparagine 201–tyrosine 203 coordinates 2-oxoglutarate. Residues histidine 213 and aspartate 215 each coordinate Fe cation. Aspartate 216 contacts substrate. A disordered region spans residues lysine 242–glutamine 271. Histidine 293 serves as a coordination point for Fe cation. 2-oxoglutarate contacts are provided by residues arginine 305 and arginine 305–arginine 311.

Belongs to the alkB family. Fe(2+) is required as a cofactor. In terms of tissue distribution, expressed ubiquitously, including in seedlings, leaves and flowers.

Its subcellular location is the nucleus. It carries out the reaction a methylated nucleobase within DNA + 2-oxoglutarate + O2 = a nucleobase within DNA + formaldehyde + succinate + CO2. Functionally, dioxygenase that repairs alkylated DNA containing 1-methyladenine and 1-ethenoadenine by oxidative demethylation. Accepts double-stranded and single-stranded substrates, with a preference for dsDNA over ssDNA. Confers resistance to methylating agents such as methylmethanesulphonate (MMS). The polypeptide is DNA oxidative demethylase ALKBH2 (ALKBH2) (Arabidopsis thaliana (Mouse-ear cress)).